The sequence spans 184 residues: MNKGNLIENYAVALFNNAMVDNIQDKIFEEITSINRIITDNFDIREFLFSPIVNKNDKINAVNLLAKNIKISTIVQNFLLLLVKNSRTASLSNIVDAYNTLLYESKNIKIVQVISANKLQPKEQEWIKSLIEKELNQKTEILFDIDSTIIGGIVIKYDSMLQDYSIKGSLEKITKALKTVNVAA.

Belongs to the ATPase delta chain family. As to quaternary structure, F-type ATPases have 2 components, F(1) - the catalytic core - and F(0) - the membrane proton channel. F(1) has five subunits: alpha(3), beta(3), gamma(1), delta(1), epsilon(1). F(0) has three main subunits: a(1), b(2) and c(10-14). The alpha and beta chains form an alternating ring which encloses part of the gamma chain. F(1) is attached to F(0) by a central stalk formed by the gamma and epsilon chains, while a peripheral stalk is formed by the delta and b chains.

The protein resides in the cell inner membrane. Functionally, f(1)F(0) ATP synthase produces ATP from ADP in the presence of a proton or sodium gradient. F-type ATPases consist of two structural domains, F(1) containing the extramembraneous catalytic core and F(0) containing the membrane proton channel, linked together by a central stalk and a peripheral stalk. During catalysis, ATP synthesis in the catalytic domain of F(1) is coupled via a rotary mechanism of the central stalk subunits to proton translocation. This protein is part of the stalk that links CF(0) to CF(1). It either transmits conformational changes from CF(0) to CF(1) or is implicated in proton conduction. This is ATP synthase subunit delta from Rickettsia massiliae (strain Mtu5).